A 106-amino-acid polypeptide reads, in one-letter code: Large ribosomal subunit protein eL30 (106 aa).

This sequence belongs to the eukaryotic ribosomal protein eL30 family.

The polypeptide is Large ribosomal subunit protein eL30 (Methanococcus maripaludis (strain C5 / ATCC BAA-1333)).